We begin with the raw amino-acid sequence, 342 residues long: L-threonine 3-dehydrogenase (342 aa).

Position 38 (Cys38) interacts with Zn(2+). Active-site charge relay system residues include Thr40 and His43. 6 residues coordinate Zn(2+): His63, Glu64, Cys93, Cys96, Cys99, and Cys107. NAD(+)-binding positions include Ile175, Asp195, Arg200, 262–264, and 286–287; these read LGI and IY.

It belongs to the zinc-containing alcohol dehydrogenase family. Homotetramer. Zn(2+) serves as cofactor.

It is found in the cytoplasm. The catalysed reaction is L-threonine + NAD(+) = (2S)-2-amino-3-oxobutanoate + NADH + H(+). The protein operates within amino-acid degradation; L-threonine degradation via oxydo-reductase pathway; glycine from L-threonine: step 1/2. Catalyzes the NAD(+)-dependent oxidation of L-threonine to 2-amino-3-ketobutyrate. The chain is L-threonine 3-dehydrogenase from Paraburkholderia phymatum (strain DSM 17167 / CIP 108236 / LMG 21445 / STM815) (Burkholderia phymatum).